A 240-amino-acid chain; its full sequence is Putative F-box/kelch-repeat protein At2g29860 (240 aa).

Residues 1 to 20 (MVLLSEIPGGSNGDDPNMNP) form a disordered region. The region spanning 17-63 (NMNPQELPEELIESIVAPIPRCYYPSLSLLSRAFRHVITSQQLFVTR) is the F-box domain. Kelch repeat units follow at residues 120–165 (KIYV…VIDG) and 167–212 (IYVI…VTYA).

This Arabidopsis thaliana (Mouse-ear cress) protein is Putative F-box/kelch-repeat protein At2g29860.